The primary structure comprises 336 residues: Dihydroorotate dehydrogenase (quinone) (336 aa).

Residues 62-66 (AGLDK) and threonine 86 contribute to the FMN site. Residue lysine 66 coordinates substrate. 111–115 (NRMGF) lines the substrate pocket. FMN-binding residues include asparagine 139 and asparagine 172. Residue asparagine 172 coordinates substrate. Catalysis depends on serine 175, which acts as the Nucleophile. Asparagine 177 provides a ligand contact to substrate. The FMN site is built by lysine 217 and threonine 245. 246–247 (NT) serves as a coordination point for substrate. Residues glycine 268, glycine 297, and 318 to 319 (YS) each bind FMN.

Belongs to the dihydroorotate dehydrogenase family. Type 2 subfamily. In terms of assembly, monomer. FMN is required as a cofactor.

The protein localises to the cell membrane. It carries out the reaction (S)-dihydroorotate + a quinone = orotate + a quinol. The protein operates within pyrimidine metabolism; UMP biosynthesis via de novo pathway; orotate from (S)-dihydroorotate (quinone route): step 1/1. Its function is as follows. Catalyzes the conversion of dihydroorotate to orotate with quinone as electron acceptor. The protein is Dihydroorotate dehydrogenase (quinone) of Serratia proteamaculans (strain 568).